The following is a 173-amino-acid chain: Translationally-controlled tumor protein homolog (173 aa).

Positions 1 to 173 (MIIFKDMITG…FKHGLEEEKV (173 aa)) constitute a TCTP domain.

This sequence belongs to the TCTP family. As to expression, expressed by the venom gland.

It is found in the secreted. Functionally, venom protein that causes edema, enhances vascular permeability and is likely related to the inflammatory activity of the venom. This is Translationally-controlled tumor protein homolog from Grammostola rosea (Chilean rose tarantula).